Reading from the N-terminus, the 68-residue chain is MERRFIVYYNCSDCACGRYVSSLLTMSGAYVNVCVCIVFFILVYLSSCYNMRVLGFLRVCIYLYKLCR.

Residues 23 to 43 (LLTMSGAYVNVCVCIVFFILV) traverse the membrane as a helical segment.

It belongs to the virgaviridae suppressor of RNA silencing family.

The protein resides in the host endoplasmic reticulum membrane. Functionally, suppressor of RNA-mediated gene silencing, also known as post-transcriptional gene silencing (PTGS), a mechanism of plant viral defense that performs sequence-specific inhibition of viral mRNAs expression. The RNA silencing suppression activity is variable depending on the origin of the isolate. In Solanum nigrum (Black nightshade), this protein is Suppressor of RNA silencing (8K protein).